Here is a 552-residue protein sequence, read N- to C-terminus: Hyaluronan synthase 2 (552 aa).

Over 1–11 (MYCERFICILR) the chain is Cytoplasmic. A helical membrane pass occupies residues 12–32 (ILGTTLFGVSLLLGITAAYIV). The Extracellular segment spans residues 33 to 45 (GYQFIQTDNYYFS). A helical membrane pass occupies residues 46 to 66 (FGLYGAILASHLIIQSLFAYL). At 67–374 (EHRKMKRSLE…NAMWFHKHHL (308 aa)) the chain is on the cytoplasmic side. A helical membrane pass occupies residues 375 to 395 (WMTYEAVITGFFPFFLIATVI). The Extracellular segment spans residues 396–402 (QLFYRGK). Residues 403–423 (IWNILLFLLTVQLVGLIKSSF) form a helical membrane-spanning segment. Topologically, residues 424 to 429 (ASFLRG) are cytoplasmic. A helical membrane pass occupies residues 430 to 450 (NIVMVFMSLYSVLYMSSLLPA). Topologically, residues 451-475 (KMFAIATINKAGWGTSGRKTIVVNF) are extracellular. The helical transmembrane segment at 476–496 (IGLIPVSIWFTILLGRVIFTI) threads the bilayer. Over 497 to 510 (YKESKKPFSESKTT) the chain is Cytoplasmic. The helical transmembrane segment at 511–531 (VLVIGTILYACYWVLLLTLYL) threads the bilayer. The Extracellular segment spans residues 532-552 (VLITKCGRRKKEQHYDMVLDV).

The protein belongs to the NodC/HAS family. Homodimer; dimerization promotes enzymatic activity. The cofactor is Mg(2+).

Its subcellular location is the cell membrane. It is found in the endoplasmic reticulum membrane. The protein resides in the vesicle. The protein localises to the golgi apparatus membrane. It localises to the lysosome. The enzyme catalyses [hyaluronan](n) + UDP-N-acetyl-alpha-D-glucosamine = N-acetyl-beta-D-glucosaminyl-(1-&gt;4)-[hyaluronan](n) + UDP + H(+). It carries out the reaction N-acetyl-beta-D-glucosaminyl-(1-&gt;4)-[hyaluronan](n) + UDP-alpha-D-glucuronate = [hyaluronan](n+1) + UDP + H(+). Its pathway is glycan biosynthesis; hyaluronan biosynthesis. Catalyzes the addition of GlcNAc or GlcUA monosaccharides to the nascent hyaluronan polymer. Therefore, it is essential to hyaluronan synthesis a major component of most extracellular matrices that has a structural role in tissues architectures and regulates cell adhesion, migration and differentiation. This is one of three isoenzymes responsible for cellular hyaluronan synthesis and it is particularly responsible for the synthesis of high molecular mass hyaluronan. This is Hyaluronan synthase 2 (HAS2) from Gallus gallus (Chicken).